A 254-amino-acid chain; its full sequence is D-aminoacyl-tRNA deacylase (254 aa).

A disordered region spans residues 61-82; the sequence is KPTLTVHTPGNLTDDNSHGGNP. Over residues 65 to 74 the composition is skewed to polar residues; sequence TVHTPGNLTD.

Belongs to the DtdA deacylase family. In terms of assembly, monomer. Requires Zn(2+) as cofactor.

It catalyses the reaction a D-aminoacyl-tRNA + H2O = a tRNA + a D-alpha-amino acid + H(+). The enzyme catalyses glycyl-tRNA(Ala) + H2O = tRNA(Ala) + glycine + H(+). Functionally, D-aminoacyl-tRNA deacylase with broad substrate specificity. By recycling D-aminoacyl-tRNA to D-amino acids and free tRNA molecules, this enzyme counteracts the toxicity associated with the formation of D-aminoacyl-tRNA entities in vivo. The polypeptide is D-aminoacyl-tRNA deacylase (Methanococcus maripaludis (strain DSM 14266 / JCM 13030 / NBRC 101832 / S2 / LL)).